The sequence spans 681 residues: uncharacterized protein (681 aa).

This sequence in the N-terminal section; belongs to the purine/pyrimidine phosphoribosyltransferase family.

This is an uncharacterized protein from Mycobacterium tuberculosis (strain CDC 1551 / Oshkosh).